The chain runs to 299 residues: MLDKTRLRIAMQKSGRLSEDSQALLARCGIKINLHQQRLIAFAENMPIDILRVRDDDIPGLVMDGVVDLGIIGENVLEEELLTRRAQGDDPRYTLLRRLDFGACRLSLAMPIDAAYDGARGLQDCRIATSYPHLLKRYLDGQGVRFKSCLLNGSVEVAPRAGLADAICDLVSTGATLEANGLREVEVIYRSKACLIQRDGEMPPAKQALIERLMTRIQGVIQARESKYIMLHAPSDRLEEIMALLPGAERPTLLPLAGDKRRVAMHMVSSETLFWETMEQLKALGASSILVLPIEKMME.

This sequence belongs to the ATP phosphoribosyltransferase family. Long subfamily. As to quaternary structure, equilibrium between an active dimeric form, an inactive hexameric form and higher aggregates. Interconversion between the various forms is largely reversible and is influenced by the natural substrates and inhibitors of the enzyme. Requires Mg(2+) as cofactor.

The protein localises to the cytoplasm. The enzyme catalyses 1-(5-phospho-beta-D-ribosyl)-ATP + diphosphate = 5-phospho-alpha-D-ribose 1-diphosphate + ATP. It participates in amino-acid biosynthesis; L-histidine biosynthesis; L-histidine from 5-phospho-alpha-D-ribose 1-diphosphate: step 1/9. Its activity is regulated as follows. Feedback inhibited by histidine. Its function is as follows. Catalyzes the condensation of ATP and 5-phosphoribose 1-diphosphate to form N'-(5'-phosphoribosyl)-ATP (PR-ATP). Has a crucial role in the pathway because the rate of histidine biosynthesis seems to be controlled primarily by regulation of HisG enzymatic activity. In Edwardsiella ictaluri (strain 93-146), this protein is ATP phosphoribosyltransferase.